Consider the following 744-residue polypeptide: Translation initiation factor IF-2, chloroplastic (744 aa).

The disordered stretch occupies residues 113–146 (NSEGSFKSGKQKKKEKGKHKQNVNKDIHHTKNNR). Basic residues predominate over residues 121–134 (GKQKKKEKGKHKQN). A tr-type G domain is found at 244–417 (NRAPIVTILG…CSLAEFINLK (174 aa)). The segment at 253-260 (GHVDHGKT) is G1. 253–260 (GHVDHGKT) contacts GTP. A G2 region spans residues 278-282 (GITQS). The segment at 303–306 (DTPG) is G3. GTP contacts are provided by residues 303–307 (DTPGH) and 357–360 (NKID). Residues 357 to 360 (NKID) form a G4 region. The tract at residues 393 to 395 (SAL) is G5.

It belongs to the TRAFAC class translation factor GTPase superfamily. Classic translation factor GTPase family. IF-2 subfamily.

It localises to the plastid. The protein localises to the chloroplast. In terms of biological role, one of the essential components for the initiation of protein synthesis. Protects formylmethionyl-tRNA from spontaneous hydrolysis and promotes its binding to the 30S ribosomal subunits. Also involved in the hydrolysis of GTP during the formation of the 70S ribosomal complex. In Gracilaria tenuistipitata var. liui (Red alga), this protein is Translation initiation factor IF-2, chloroplastic (infB).